The chain runs to 195 residues: Replication restart protein PriC (195 aa).

It belongs to the PriC family. In terms of assembly, monomer. Component of the replication restart primosome, which is composed of PriA, PriB, PriC, DnaB and DnaT; DnaG primase associates transiently with this complex. Interacts with the C-terminus of SSB; this interaction is required to load the main replicative helicase onto substrate replication forks. Interacts with helicase DnaB alone and in the DnaB-DnaC complex, probably 1:1 binding with DnaB.

Its function is as follows. Involved in the restart of stalled replication forks, which reloads the DnaB replicative helicase on sites other than the origin of replication. Recognizes abandoned replication forks and remodels DNA single-stranded binding protein (SSB) on ssDNA to uncover a loading site for DnaB. There are several restart pathways, the PriA-PriC pathway is a minor restart pathway. Part of the minor PriC-Rep pathway for restart of stalled replication forks, which has a different substrate specificity than PriA. Part of the major restart pathway with PriA, PriB, DnaB, DnaT and DnaG primase. priB and priC have redundant roles in the cell. The polypeptide is Replication restart protein PriC (Haemophilus influenzae (strain ATCC 51907 / DSM 11121 / KW20 / Rd)).